The following is a 227-amino-acid chain: Uracil-DNA glycosylase (227 aa).

D64 (proton acceptor) is an active-site residue.

It belongs to the uracil-DNA glycosylase (UDG) superfamily. UNG family.

Its subcellular location is the cytoplasm. The enzyme catalyses Hydrolyzes single-stranded DNA or mismatched double-stranded DNA and polynucleotides, releasing free uracil.. Functionally, excises uracil residues from the DNA which can arise as a result of misincorporation of dUMP residues by DNA polymerase or due to deamination of cytosine. In Alkaliphilus metalliredigens (strain QYMF), this protein is Uracil-DNA glycosylase.